The primary structure comprises 212 residues: Adenylate kinase (212 aa).

14–19 (GSGKGT) is a binding site for ATP. An NMP region spans residues 34-63 (STGDLFRKKISEDSQFAAQIQNYLSSGSYV). AMP contacts are provided by residues threonine 35, arginine 40, 61 to 63 (SYV), 89 to 92 (GYPR), and glutamine 96. The tract at residues 126 to 163 (QRLFCQKCQKSYNLLLAKPKNELKCDLDSTDLITRNDD) is LID. Arginine 127 is an ATP binding site. Zn(2+)-binding residues include cysteine 130 and cysteine 133. Residue 136–137 (SY) coordinates ATP. Cysteine 150 and aspartate 153 together coordinate Zn(2+). AMP contacts are provided by arginine 160 and arginine 171. An ATP-binding site is contributed by glutamine 199.

It belongs to the adenylate kinase family. Monomer.

It is found in the cytoplasm. The enzyme catalyses AMP + ATP = 2 ADP. It functions in the pathway purine metabolism; AMP biosynthesis via salvage pathway; AMP from ADP: step 1/1. Functionally, catalyzes the reversible transfer of the terminal phosphate group between ATP and AMP. Plays an important role in cellular energy homeostasis and in adenine nucleotide metabolism. This chain is Adenylate kinase, found in Mesomycoplasma hyopneumoniae (strain J / ATCC 25934 / NCTC 10110) (Mycoplasma hyopneumoniae).